The following is a 190-amino-acid chain: uncharacterized protein (190 aa).

This sequence belongs to the Iojap/RsfS family.

This is an uncharacterized protein from Caenorhabditis elegans.